Reading from the N-terminus, the 206-residue chain is Two-component response regulator ARR15 (206 aa).

The region spanning 19–146 is the Response regulatory domain; the sequence is HVLAVDDSFV…DVKRLKELIM (128 aa). A 4-aspartylphosphate modification is found at Asp-79. The interval 151 to 206 is disordered; sequence AEEGKTKKLSPKRILQNDIDSSPSSSSTSSSSSSHDVSSLDDDTPSSKRIKLESRG. The span at 168 to 187 shows a compositional bias: low complexity; it reads DIDSSPSSSSTSSSSSSHDV.

This sequence belongs to the ARR family. Type-A subfamily. Post-translationally, two-component system major event consists of a His-to-Asp phosphorelay between a sensor histidine kinase (HK) and a response regulator (RR). In plants, the His-to-Asp phosphorelay involves an additional intermediate named Histidine-containing phosphotransfer protein (HPt). This multistep phosphorelay consists of a His-Asp-His-Asp sequential transfer of a phosphate group between first a His and an Asp of the HK protein, followed by the transfer to a conserved His of the HPt protein and finally the transfer to an Asp in the receiver domain of the RR protein.

Its subcellular location is the nucleus. Functions as a response regulator involved in His-to-Asp phosphorelay signal transduction system. Phosphorylation of the Asp residue in the receiver domain activates the ability of the protein to promote the transcription of target genes. Type-A response regulators seem to act as negative regulators of the cytokinin signaling. This chain is Two-component response regulator ARR15 (ARR15), found in Arabidopsis thaliana (Mouse-ear cress).